A 158-amino-acid polypeptide reads, in one-letter code: Phosphopantetheine adenylyltransferase (158 aa).

Substrate is bound at residue Ser-9. ATP contacts are provided by residues 9–10 (SF) and His-17. Lys-41, Val-73, and Lys-87 together coordinate substrate. ATP-binding positions include 88–90 (GLR), Glu-98, and 122–128 (YSFVSSS).

It belongs to the bacterial CoaD family. Homohexamer. The cofactor is Mg(2+).

The protein localises to the cytoplasm. It catalyses the reaction (R)-4'-phosphopantetheine + ATP + H(+) = 3'-dephospho-CoA + diphosphate. Its pathway is cofactor biosynthesis; coenzyme A biosynthesis; CoA from (R)-pantothenate: step 4/5. Its function is as follows. Reversibly transfers an adenylyl group from ATP to 4'-phosphopantetheine, yielding dephospho-CoA (dPCoA) and pyrophosphate. This Mycobacterium sp. (strain JLS) protein is Phosphopantetheine adenylyltransferase.